The sequence spans 202 residues: MTYVVGVTGGIGSGKSAATAEFEKLGITVIDADIVSRQVVMPGTPCLRAIAEHFGRDLLTDKGELDRKALRQKVFSDPAEKDWLNSLLHPAIREEILTQLEQASSPYVILSAPLLLENNLDKYCQRVLVVDVPEELQLQRTIQRDESPKEEVEAIMKAQLSRKARLRKADDILNNESSIDQLRRQVNQLHQRYLAATVAQEE.

The region spanning 4-200 (VVGVTGGIGS…QRYLAATVAQ (197 aa)) is the DPCK domain. An ATP-binding site is contributed by 12–17 (GSGKSA).

Belongs to the CoaE family.

The protein resides in the cytoplasm. It catalyses the reaction 3'-dephospho-CoA + ATP = ADP + CoA + H(+). It participates in cofactor biosynthesis; coenzyme A biosynthesis; CoA from (R)-pantothenate: step 5/5. Catalyzes the phosphorylation of the 3'-hydroxyl group of dephosphocoenzyme A to form coenzyme A. This is Dephospho-CoA kinase from Idiomarina loihiensis (strain ATCC BAA-735 / DSM 15497 / L2-TR).